The chain runs to 365 residues: Chorismate synthase (365 aa).

Position 46 (Arg46) interacts with NADP(+). FMN is bound by residues 123–125 (RSS), 241–242 (NG), Gly281, 296–300 (KPTPS), and Arg322.

It belongs to the chorismate synthase family. In terms of assembly, homotetramer. FMNH2 serves as cofactor.

The catalysed reaction is 5-O-(1-carboxyvinyl)-3-phosphoshikimate = chorismate + phosphate. The protein operates within metabolic intermediate biosynthesis; chorismate biosynthesis; chorismate from D-erythrose 4-phosphate and phosphoenolpyruvate: step 7/7. In terms of biological role, catalyzes the anti-1,4-elimination of the C-3 phosphate and the C-6 proR hydrogen from 5-enolpyruvylshikimate-3-phosphate (EPSP) to yield chorismate, which is the branch point compound that serves as the starting substrate for the three terminal pathways of aromatic amino acid biosynthesis. This reaction introduces a second double bond into the aromatic ring system. The chain is Chorismate synthase from Helicobacter pylori (strain HPAG1).